The following is a 310-amino-acid chain: Coproporphyrin III ferrochelatase (310 aa).

Fe-coproporphyrin III-binding positions include Y13, R30, 46–47 (RY), S54, and Y125. H181 and E262 together coordinate Fe(2+).

Belongs to the ferrochelatase family.

It localises to the cytoplasm. It catalyses the reaction Fe-coproporphyrin III + 2 H(+) = coproporphyrin III + Fe(2+). The protein operates within porphyrin-containing compound metabolism; protoheme biosynthesis. Involved in coproporphyrin-dependent heme b biosynthesis. Catalyzes the insertion of ferrous iron into coproporphyrin III to form Fe-coproporphyrin III. In Halalkalibacterium halodurans (strain ATCC BAA-125 / DSM 18197 / FERM 7344 / JCM 9153 / C-125) (Bacillus halodurans), this protein is Coproporphyrin III ferrochelatase.